The primary structure comprises 242 residues: MTFTLLPAVDVVDGQAVRLDQGEAGTEKSYGSPIAAALKWQEQGASWLHFVDLDAAFNRGSNHELMAEVVKNLDINVELTGGIRDDASLKRALATGARRVNIGTAALEKPEWIEKVLGEYGDAIAVDIAVRNIDGQWRTRGNGWVSDGGDLWEVLERLDSQGCTRFVVTDVSKDGTLSGPNIDLLRDVSAATDAKVVASGGISTLEDVLELARYEDEGIDSAIIGKALYEGRFTLKEALAAL.

Catalysis depends on Asp-10, which acts as the Proton acceptor.

Belongs to the HisA/HisF family.

The protein resides in the cytoplasm. It catalyses the reaction 1-(5-phospho-beta-D-ribosyl)-5-[(5-phospho-beta-D-ribosylamino)methylideneamino]imidazole-4-carboxamide = 5-[(5-phospho-1-deoxy-D-ribulos-1-ylimino)methylamino]-1-(5-phospho-beta-D-ribosyl)imidazole-4-carboxamide. It participates in amino-acid biosynthesis; L-histidine biosynthesis; L-histidine from 5-phospho-alpha-D-ribose 1-diphosphate: step 4/9. The chain is 1-(5-phosphoribosyl)-5-[(5-phosphoribosylamino)methylideneamino] imidazole-4-carboxamide isomerase from Corynebacterium diphtheriae (strain ATCC 700971 / NCTC 13129 / Biotype gravis).